The following is a 72-amino-acid chain: MKPSEIREMSIEEIDAKIRELRLQLAKERGLLTMGTSLENPMVIRNLRRDIARLLTIKKEKLREREKGKVKK.

The protein belongs to the universal ribosomal protein uL29 family. In terms of assembly, part of the 50S ribosomal subunit.

In Pyrococcus furiosus (strain ATCC 43587 / DSM 3638 / JCM 8422 / Vc1), this protein is Large ribosomal subunit protein uL29.